We begin with the raw amino-acid sequence, 527 residues long: Probable T-complex protein 1 subunit beta (527 aa).

Belongs to the TCP-1 chaperonin family. In terms of assembly, heterooligomeric complex of about 850 to 900 kDa that forms two stacked rings, 12 to 16 nm in diameter.

It is found in the cytoplasm. In terms of biological role, molecular chaperone; assists the folding of proteins upon ATP hydrolysis. Known to play a role, in vitro, in the folding of actin and tubulin. The chain is Probable T-complex protein 1 subunit beta (cct2) from Schizosaccharomyces pombe (strain 972 / ATCC 24843) (Fission yeast).